A 153-amino-acid polypeptide reads, in one-letter code: Transcriptional repressor NrdR (153 aa).

A zinc finger spans residues 3 to 33 (CPYCNYKESKVIDSRHTDLKSIRRRRECESC). An ATP-cone domain is found at 48-138 (LMVIKKDNSR…VYRQFKDINT (91 aa)).

It belongs to the NrdR family. Zn(2+) serves as cofactor.

Negatively regulates transcription of bacterial ribonucleotide reductase nrd genes and operons by binding to NrdR-boxes. This chain is Transcriptional repressor NrdR, found in Clostridioides difficile (strain 630) (Peptoclostridium difficile).